The following is a 300-amino-acid chain: GTPase Era (300 aa).

An Era-type G domain is found at 4–172 (KSGFVALAGK…LEKIKEELPE (169 aa)). The interval 12 to 19 (GKPNVGKS) is G1. A GTP-binding site is contributed by 12 to 19 (GKPNVGKS). Residues 38–42 (QTTRN) form a G2 region. Positions 59–62 (DTPG) are G3. GTP-binding positions include 59–63 (DTPGI) and 121–124 (NKID). A G4 region spans residues 121-124 (NKID). The G5 stretch occupies residues 151–153 (ISA). The KH type-2 domain maps to 195–280 (IREKIFHLTR…YLDLNVKVKE (86 aa)).

Belongs to the TRAFAC class TrmE-Era-EngA-EngB-Septin-like GTPase superfamily. Era GTPase family. As to quaternary structure, monomer.

It localises to the cytoplasm. The protein localises to the cell inner membrane. Its function is as follows. An essential GTPase that binds both GDP and GTP, with rapid nucleotide exchange. Plays a role in 16S rRNA processing and 30S ribosomal subunit biogenesis and possibly also in cell cycle regulation and energy metabolism. The polypeptide is GTPase Era (Thermotoga petrophila (strain ATCC BAA-488 / DSM 13995 / JCM 10881 / RKU-1)).